The chain runs to 821 residues: MRVSLRWLRELVAVDLDVTMLADRLTMAGFEVEDIEDRRTWAEGVVVGYILACEPHPNAQKLRVCQVDVGQGEPRTIVCGAPNAAAGLYVPVALPGAYLAKIDLKIRPAKLRGVKSEGMICSLAELGLTKESEGIHTFTDAVTVGEDVRPLLGLDDVILHLTSTANRADALSMVGIAREVAALTGAPLTLPTPRAIAPKKSGAKGPVQLAIADPQACPAYCGTLITHVQIAPSPLWLQQRLEAAGLRAINNVVDITNYILLKWGQPLHAFDWDRLQKVAAQTPVSVGVRFAKAGETLKTLDGQERRLSSENLLITAGDVPVALAGVMGGEETEVHPGTQNVFLEAALFASPVIRRSARAQGLRTEASARYERGVNPAELEAATAEAIALLKEIAQGTVSDTTLADQRPPLERTLTLRLEQVHRLLGAVVSEAEDSDEPAYLDPETVEELLSRLGFHLSRQETLEDELVVWSVTVPPYRFRDIEREVDLIEEIARLYGYDRFEETLPAQTEVGALPLELTLLREVRAAFRGAGLTELMHYSWVKGGQPNQVTVVNPLVAEFSSLRTDLITGLVQAFRYNHEQGNPPLNGFEIGRVFGQDEEGLWENDRLGGIIGGDPWQGKWVRRSQQPQPLTWYEAKGILESVFQRFGLNVEYQSDRHDERLHPGRTAVLCLQGERLGIFGQLHPQYAATLEIPAAIYVFELDLEVLLSRLEERYRQIVFQPFSTYPASDRDLAFFAPTALTVAELSRTIWKAAGGRDSFLESVELFDEYSGSGVPAGQRSLAFRLTYRASDRTLTEAEVNELHQRIRDSLVEKYAVTLRS.

One can recognise a tRNA-binding domain in the interval arginine 39–arginine 149. The 95-residue stretch at proline 409 to glutamate 503 folds into the B5 domain. Mg(2+) is bound by residues aspartate 481, aspartate 487, glutamate 490, and glutamate 491. The 97-residue stretch at serine 724–arginine 820 folds into the FDX-ACB domain.

Belongs to the phenylalanyl-tRNA synthetase beta subunit family. Type 1 subfamily. As to quaternary structure, tetramer of two alpha and two beta subunits. Mg(2+) is required as a cofactor.

It localises to the cytoplasm. The catalysed reaction is tRNA(Phe) + L-phenylalanine + ATP = L-phenylalanyl-tRNA(Phe) + AMP + diphosphate + H(+). This Thermosynechococcus vestitus (strain NIES-2133 / IAM M-273 / BP-1) protein is Phenylalanine--tRNA ligase beta subunit.